The sequence spans 396 residues: CCA-adding enzyme (396 aa).

2 residues coordinate ATP: G27 and R30. The CTP site is built by G27 and R30. Positions 40 and 42 each coordinate Mg(2+). R111, D154, R157, R160, and R163 together coordinate ATP. 5 residues coordinate CTP: R111, D154, R157, R160, and R163.

It belongs to the tRNA nucleotidyltransferase/poly(A) polymerase family. Bacterial CCA-adding enzyme type 3 subfamily. In terms of assembly, homodimer. The cofactor is Mg(2+).

It catalyses the reaction a tRNA precursor + 2 CTP + ATP = a tRNA with a 3' CCA end + 3 diphosphate. The enzyme catalyses a tRNA with a 3' CCA end + 2 CTP + ATP = a tRNA with a 3' CCACCA end + 3 diphosphate. Catalyzes the addition and repair of the essential 3'-terminal CCA sequence in tRNAs without using a nucleic acid template. Adds these three nucleotides in the order of C, C, and A to the tRNA nucleotide-73, using CTP and ATP as substrates and producing inorganic pyrophosphate. tRNA 3'-terminal CCA addition is required both for tRNA processing and repair. Also involved in tRNA surveillance by mediating tandem CCA addition to generate a CCACCA at the 3' terminus of unstable tRNAs. While stable tRNAs receive only 3'-terminal CCA, unstable tRNAs are marked with CCACCA and rapidly degraded. In Bacillus velezensis (strain DSM 23117 / BGSC 10A6 / LMG 26770 / FZB42) (Bacillus amyloliquefaciens subsp. plantarum), this protein is CCA-adding enzyme.